Consider the following 352-residue polypeptide: Alpha-2-HS-glycoprotein (352 aa).

Positions 1–18 (MKSLVLLLCFAQLWSCQS) are cleaved as a signal peptide. In terms of domain architecture, Cystatin fetuin-A-type 1 spans 19 to 133 (APQGAGLGFR…QFRVLHAQCH (115 aa)). 6 disulfides stabilise this stretch: C32-C343, C89-C100, C114-C132, C146-C149, C208-C219, and C230-C247. N99 carries an N-linked (GlcNAc...) asparagine glycan. S134 carries the phosphoserine modification. T135 is modified (phosphothreonine). S138 bears the Phosphoserine mark. The region spanning 144 to 250 (KFCPRCPILI…EEVSVACKLF (107 aa)) is the Cystatin fetuin-A-type 2 domain. Residues N156 and N176 are each glycosylated (N-linked (GlcNAc...) asparagine). Positions 256 to 273 (PANANPAGPAPTVGQAAP) are enriched in low complexity. The interval 256 to 280 (PANANPAGPAPTVGQAAPVAPPAGP) is disordered. Residues S309, S313, S316, and S318 each carry the phosphoserine modification. A disordered region spans residues 319 to 338 (GEVLHSPKVGQPGDAGAAGP). The span at 328–338 (GQPGDAGAAGP) shows a compositional bias: low complexity.

Belongs to the fetuin family. Undergoes complex post-translational modification involving N-glycosylation, and addition of fucose and sialic acid residues. Phosphorylation occurs at a serine residue. Post-translationally, phosphorylated by FAM20C in the extracellular medium. As to expression, synthesized in liver and secreted by the hepatocytes in the blood.

The protein resides in the secreted. In terms of biological role, could inhibit both insulin-receptor tyrosine kinase activity and insulin-stimulated receptor autophosphorylation and, concomitantly, antagonize the mitogenic effect of the hormone in cultured rat hepatoma cells. The sequence is that of Alpha-2-HS-glycoprotein (Ahsg) from Rattus norvegicus (Rat).